Reading from the N-terminus, the 662-residue chain is Histidine decarboxylase (662 aa).

2 residues coordinate substrate: Tyr88 and His201. The residue at position 312 (Lys312) is an N6-(pyridoxal phosphate)lysine. The segment at 489 to 518 (QPSPRAKNVIPPPPGTRGLSLESVSEGGDD) is disordered.

This sequence belongs to the group II decarboxylase family. As to quaternary structure, homodimer. The cofactor is pyridoxal 5'-phosphate.

The catalysed reaction is L-histidine + H(+) = histamine + CO2. Its pathway is amine and polyamine biosynthesis; histamine biosynthesis; histamine from L-histidine: step 1/1. Functionally, catalyzes the biosynthesis of histamine from histidine. The polypeptide is Histidine decarboxylase (Hdc) (Mus musculus (Mouse)).